The primary structure comprises 424 residues: GTPase Obg (424 aa).

The 158-residue stretch at 1–158 (MFYDQAKIYV…RNLLLELKLL (158 aa)) folds into the Obg domain. The region spanning 159–329 (ADVGLVGFPN…LVYAAAKALP (171 aa)) is the OBG-type G domain. GTP contacts are provided by residues 165–172 (GFPNVGKS), 190–194 (FTTLV), 212–215 (DIPG), 282–285 (NKMD), and 310–312 (SAA). Residues Ser-172 and Thr-192 each contribute to the Mg(2+) site. In terms of domain architecture, OCT spans 347–424 (TQASAPHRFE…IAGIEFEWEE (78 aa)).

This sequence belongs to the TRAFAC class OBG-HflX-like GTPase superfamily. OBG GTPase family. In terms of assembly, monomer. Requires Mg(2+) as cofactor.

It localises to the cytoplasm. Functionally, an essential GTPase which binds GTP, GDP and possibly (p)ppGpp with moderate affinity, with high nucleotide exchange rates and a fairly low GTP hydrolysis rate. Plays a role in control of the cell cycle, stress response, ribosome biogenesis and in those bacteria that undergo differentiation, in morphogenesis control. This is GTPase Obg from Desulfitobacterium hafniense (strain DSM 10664 / DCB-2).